The sequence spans 307 residues: Ribosomal RNA small subunit methyltransferase H (307 aa).

S-adenosyl-L-methionine contacts are provided by residues 33 to 35 (GGY), aspartate 51, phenylalanine 78, aspartate 96, and glutamine 103.

It belongs to the methyltransferase superfamily. RsmH family.

It is found in the cytoplasm. It carries out the reaction cytidine(1402) in 16S rRNA + S-adenosyl-L-methionine = N(4)-methylcytidine(1402) in 16S rRNA + S-adenosyl-L-homocysteine + H(+). Specifically methylates the N4 position of cytidine in position 1402 (C1402) of 16S rRNA. This Rickettsia conorii (strain ATCC VR-613 / Malish 7) protein is Ribosomal RNA small subunit methyltransferase H.